The following is a 631-amino-acid chain: MSHWAPEWKRAEANPRDLGASWDVRGSRGSGWSGPFGHQGPRAAGSREPPLCFKIKNNMVGVVIGYSGSKIKDLQHSTNTKIQIINGESEAKVRIFGNREMKAKAKAAIETLIRKQESYNSESSVDNAASQTPIGRNLGRNDIVGEAEPLSNWDRIRAAVVECEKRKWADLPPVKKNFYIESKATSCMSEMQVINWRKENFNITCDDLKSGEKRLIPKPTCRFKDAFQQYPDLLKSIIRVGIVKPTPIQSQAWPIILQGIDLIVVAQTGTGKTLSYLMPGFIHLDSQPISREQRNGPGMLVLTPTRELALHVEAECSKYSYKGLKSICIYGGRNRNGQIEDISKGVDIIIATPGRLNDLQMNNSVNLRSITYLVIDEADKMLDMEFEPQIRKILLDVRPDRQTVMTSATWPDTVRQLALSYLKDPMIVYVGNLNLVAVNTVKQNIIVTTEKEKRALTQEFVENMSPNDKVIMFVSQKHIADDLSSDFNIQGISAESLHGNSEQSDQERAVEDFKSGNIKILITTDIVSRGLDLNDVTHVYNYDFPRNIDVYVHRVGYIGRTGKTGTSVTLITQRDSKMAGELIKILDRANQSVPEDLVVMAEQYKLNQQKRHRETRSRKPGQRRKEFYFLS.

The 62-residue stretch at 48–109 (EPPLCFKIKN…EMKAKAKAAI (62 aa)) folds into the KH domain. A Q motif motif is present at residues 222–250 (RFKDAFQQYPDLLKSIIRVGIVKPTPIQS). ATP contacts are provided by residues Lys244, Gln249, 268 to 273 (TGTGKT), and His311. One can recognise a Helicase ATP-binding domain in the interval 253–428 (WPIILQGIDL…LSYLKDPMIV (176 aa)). The DEAD box motif lies at 376 to 379 (DEAD). One can recognise a Helicase C-terminal domain in the interval 440 to 601 (TVKQNIIVTT…SVPEDLVVMA (162 aa)).

It belongs to the DEAD box helicase family. As to expression, expressed in testis. Wide expression in various cancer tissues and cancer cell lines.

It is found in the nucleus. It catalyses the reaction ATP + H2O = ADP + phosphate + H(+). The chain is Probable ATP-dependent RNA helicase DDX53 (DDX53) from Homo sapiens (Human).